The primary structure comprises 366 residues: Major outer membrane protein (366 aa).

A signal peptide spans 1–21; that stretch reads MKKTLLATAIAGAMAASGAQA.

Belongs to the Gram-negative porin family. In terms of assembly, homotrimer.

Its subcellular location is the cell outer membrane. The polypeptide is Major outer membrane protein (Halomonas elongata (strain ATCC 33173 / DSM 2581 / NBRC 15536 / NCIMB 2198 / 1H9)).